Consider the following 310-residue polypeptide: ADP-L-glycero-D-manno-heptose-6-epimerase (310 aa).

NADP(+) contacts are provided by residues 10 to 11, 31 to 32, Lys-38, Lys-53, 75 to 79, and Asn-92; these read FI, DN, and EGACS. The active-site Proton acceptor is the Tyr-140. Lys-144 contacts NADP(+). Residue Asn-169 coordinates substrate. NADP(+) is bound by residues Val-170 and Lys-178. Lys-178 serves as the catalytic Proton acceptor. Substrate contacts are provided by residues Ser-180, His-187, 201–204, and Arg-209; that span reads FEGS. An N6-acetyllysine modification is found at Lys-267. Tyr-272 lines the substrate pocket.

It belongs to the NAD(P)-dependent epimerase/dehydratase family. HldD subfamily. As to quaternary structure, homopentamer. NADP(+) serves as cofactor.

The enzyme catalyses ADP-D-glycero-beta-D-manno-heptose = ADP-L-glycero-beta-D-manno-heptose. It functions in the pathway nucleotide-sugar biosynthesis; ADP-L-glycero-beta-D-manno-heptose biosynthesis; ADP-L-glycero-beta-D-manno-heptose from D-glycero-beta-D-manno-heptose 7-phosphate: step 4/4. Functionally, catalyzes the interconversion between ADP-D-glycero-beta-D-manno-heptose and ADP-L-glycero-beta-D-manno-heptose via an epimerization at carbon 6 of the heptose. The chain is ADP-L-glycero-D-manno-heptose-6-epimerase from Escherichia coli (strain ATCC 8739 / DSM 1576 / NBRC 3972 / NCIMB 8545 / WDCM 00012 / Crooks).